The sequence spans 330 residues: D-lactate dehydrogenase (330 aa).

NAD(+) is bound by residues 156-157 (RI), D176, 206-207 (VP), 233-235 (AAR), and D259. R235 is an active-site residue. E264 is a catalytic residue. The active-site Proton donor is the H296.

The protein belongs to the D-isomer specific 2-hydroxyacid dehydrogenase family.

It catalyses the reaction (R)-lactate + NAD(+) = pyruvate + NADH + H(+). The sequence is that of D-lactate dehydrogenase (ldhD) from Staphylococcus epidermidis (strain ATCC 35984 / DSM 28319 / BCRC 17069 / CCUG 31568 / BM 3577 / RP62A).